Reading from the N-terminus, the 446-residue chain is Elongation factor Ts, mitochondrial (446 aa).

The N-terminal 33 residues, 1–33, are a transit peptide targeting the mitochondrion; it reads MSGSRSALSVVRLAACAKPCTLGSTSSVLTRPF.

Belongs to the EF-Ts family.

The protein localises to the mitochondrion. Functionally, associates with the EF-Tu.GDP complex and induces the exchange of GDP to GTP. It remains bound to the aminoacyl-tRNA.EF-Tu.GTP complex up to the GTP hydrolysis stage on the ribosome. In Mycosarcoma maydis (Corn smut fungus), this protein is Elongation factor Ts, mitochondrial.